A 418-amino-acid chain; its full sequence is FXa-directed anticoagulant (418 aa).

The N-terminal stretch at 1-19 (MNLKIAIIVICQLVYFTQG) is a signal peptide. Asn117, Asn167, and Asn286 each carry an N-linked (GlcNAc...) asparagine glycan.

The protein belongs to the serpin family. In terms of assembly, interacts with host coagulation factor X/F10 (activated). As to expression, female salivary gland (at protein level).

The protein resides in the secreted. Functionally, anticoagulant and antithrombotic serpin-type protein inhibiting host coagulation factor Xa (F10). Does not inhibit host uPA/urokinase-type plasminogen activator (PLAU), kallikrein, granzyme B (GZMB), matriptase, elastase, alpha-chymotrypsin, chymase, coagulation factor XIIa (F12), coagulation factor XIa (F11), plasmin (PLG), thrombin (F2), trypsin and cathepsin G (CTSG). Inhibits factor Xa-induced production of pro-inflammatory cytokines, such as MCP-1/CCL2, TNF-alpha/TNF, IL-1beta/IL1B, IL6, IL8/CXCL8 and IL18, in human endothelial cells. Inhibits factor Xa-induced up-regulation of protease-activated receptors (PARs) F2R, F2RL1 and F2RL2 in human endothelial cells. Prevents activation of host F2RL1 via inhibition of F2RL1 cleavage by host factor Xa. Inhibits factor Xa-induced up-regulation of adhesion molecules ICAM1 and VCAM1 in human endothelial cells. Inhibits factor Xa-induced up-regulation of phosphorylated ERK1/2 in human endothelial cells. Inhibits factor Xa-induced activation of transcription factor NF-kappa-B in human endothelial cells. Reduces factor Xa-induced edema in the host. Reduces factor Xa-induced endothelial permeability in the host. This Aedes albopictus (Asian tiger mosquito) protein is FXa-directed anticoagulant.